The following is a 1439-amino-acid chain: Fanconi anemia group A protein homolog (1439 aa).

Residues 1-20 (MPGSPARGAAMGGGPRGLRK) form a disordered region. A Nuclear localization signal motif is present at residues 19–35 (RKTWTELLAGRVKKQKY).

In terms of assembly, belongs to the multisubunit FA complex composed of FANCA, FANCB, FANCC, FANCE, FANCF, FANCG, FANCL/PHF9 and FANCM. In complex with FANCF, FANCG and FANCL, but not with FANCC, nor FANCE, interacts with HES1; this interaction may be essential for the stability and nuclear localization of FA core complex proteins. The complex with FANCC and FANCG may also include EIF2AK2 and HSP70. Interacts with FAAP20; interaction is direct. In terms of processing, phosphorylated primarily on serine residues. Phosphorylation is required for the formation of the nuclear complex. Mainly expressed in testis and lymphoid tissues like thymus, lymph nodes, and spleen, and at lower levels in kidney and ovary.

The protein localises to the nucleus. It localises to the cytoplasm. In terms of biological role, DNA repair protein that may operate in a postreplication repair or a cell cycle checkpoint function. May be involved in interstrand DNA cross-link repair and in the maintenance of normal chromosome stability. This chain is Fanconi anemia group A protein homolog (Fanca), found in Mus musculus (Mouse).